Reading from the N-terminus, the 69-residue chain is Protein translocase subunit SecE (69 aa).

Residues 43 to 63 form a helical membrane-spanning segment; it reads GLGICLLGFVGFVIHVPITYL.

The protein belongs to the SecE/SEC61-gamma family. Component of the Sec protein translocase complex. Heterotrimer consisting of SecY (alpha), SecG (beta) and SecE (gamma) subunits. The heterotrimers can form oligomers, although 1 heterotrimer is thought to be able to translocate proteins. Interacts with the ribosome. May interact with SecDF, and other proteins may be involved.

The protein resides in the cell membrane. Essential subunit of the Sec protein translocation channel SecYEG. Clamps together the 2 halves of SecY. May contact the channel plug during translocation. In Methanococcus maripaludis (strain DSM 14266 / JCM 13030 / NBRC 101832 / S2 / LL), this protein is Protein translocase subunit SecE.